Consider the following 375-residue polypeptide: MDIEKKIELVSRKPTEEVLTVDNLKDLLEMGMPLQHYIGFEISGYIHLGTGLMAGAKIADFQKAGIKTRVFLADWHSWINDKLGGDLEVIQKVALGYFKEGMKQSIKVMGGDPEKVEFVLASEILERGDYWRTIIDISKNVTLARMMRSITIMGRQMGEAIDFAKLIYPAMQVADIFYQGVNIAHAGMDQRKAHVIAREVAEKLKYHPLVWDGKKVKPIAVHHHLLLGLQEPPKWPIEGEEEFKEIKAQMKMSKSKPYSAVFIHDTPEEIKQKLRKAFCPAGEVNYNPVLDWAEHIIFREEPTEFTIHRPAKFGGDVTYTTFEELKRDFAEGKLHPLDLKNAVAEYLVELLKPVREYFEKHPEPLELMKSVQITR.

The L-tyrosine site is built by Tyr-37, Tyr-168, Gln-172, Asp-175, and Gln-190. Positions 251 to 255 (KMSKS) match the 'KMSKS' region motif. Residue Lys-254 coordinates ATP.

It belongs to the class-I aminoacyl-tRNA synthetase family. TyrS type 4 subfamily. Homodimer.

Its subcellular location is the cytoplasm. It carries out the reaction tRNA(Tyr) + L-tyrosine + ATP = L-tyrosyl-tRNA(Tyr) + AMP + diphosphate + H(+). In terms of biological role, catalyzes the attachment of tyrosine to tRNA(Tyr) in a two-step reaction: tyrosine is first activated by ATP to form Tyr-AMP and then transferred to the acceptor end of tRNA(Tyr). This chain is Tyrosine--tRNA ligase, found in Thermococcus sibiricus (strain DSM 12597 / MM 739).